Here is a 130-residue protein sequence, read N- to C-terminus: MSMQDPIADMLTRIRNGQAANKTAVSMPSSKLKVAIANLLKEEGFIEDYKVEGDTKPTLELVLKYFQGKPVVETIQRISRPGLRIYKKKDALPKVMAGMGIAVISTSKGVMTDRAARQAGLGGEIICYVA.

Belongs to the universal ribosomal protein uS8 family. In terms of assembly, part of the 30S ribosomal subunit. Contacts proteins S5 and S12.

One of the primary rRNA binding proteins, it binds directly to 16S rRNA central domain where it helps coordinate assembly of the platform of the 30S subunit. The protein is Small ribosomal subunit protein uS8 of Sodalis glossinidius (strain morsitans).